A 397-amino-acid polypeptide reads, in one-letter code: Chorismate synthase (397 aa).

NADP(+) contacts are provided by arginine 40 and arginine 46. Residues 129–131 (RSS), 257–258 (QA), glycine 302, 317–321 (KPISS), and arginine 343 contribute to the FMN site.

This sequence belongs to the chorismate synthase family. As to quaternary structure, homotetramer. Requires FMNH2 as cofactor.

It catalyses the reaction 5-O-(1-carboxyvinyl)-3-phosphoshikimate = chorismate + phosphate. Its pathway is metabolic intermediate biosynthesis; chorismate biosynthesis; chorismate from D-erythrose 4-phosphate and phosphoenolpyruvate: step 7/7. Its function is as follows. Catalyzes the anti-1,4-elimination of the C-3 phosphate and the C-6 proR hydrogen from 5-enolpyruvylshikimate-3-phosphate (EPSP) to yield chorismate, which is the branch point compound that serves as the starting substrate for the three terminal pathways of aromatic amino acid biosynthesis. This reaction introduces a second double bond into the aromatic ring system. The chain is Chorismate synthase from Chlorobium phaeovibrioides (strain DSM 265 / 1930) (Prosthecochloris vibrioformis (strain DSM 265)).